The chain runs to 232 residues: 2-C-methyl-D-erythritol 4-phosphate cytidylyltransferase (232 aa).

This sequence belongs to the IspD/TarI cytidylyltransferase family. IspD subfamily.

The enzyme catalyses 2-C-methyl-D-erythritol 4-phosphate + CTP + H(+) = 4-CDP-2-C-methyl-D-erythritol + diphosphate. It participates in isoprenoid biosynthesis; isopentenyl diphosphate biosynthesis via DXP pathway; isopentenyl diphosphate from 1-deoxy-D-xylulose 5-phosphate: step 2/6. In terms of biological role, catalyzes the formation of 4-diphosphocytidyl-2-C-methyl-D-erythritol from CTP and 2-C-methyl-D-erythritol 4-phosphate (MEP). This chain is 2-C-methyl-D-erythritol 4-phosphate cytidylyltransferase, found in Rhodococcus erythropolis (strain PR4 / NBRC 100887).